The sequence spans 306 residues: tRNA dimethylallyltransferase (306 aa).

Position 6–13 (6–13) interacts with ATP; the sequence is GPTASGKS. Residue 8–13 participates in substrate binding; sequence TASGKS.

Belongs to the IPP transferase family. As to quaternary structure, monomer. The cofactor is Mg(2+).

The catalysed reaction is adenosine(37) in tRNA + dimethylallyl diphosphate = N(6)-dimethylallyladenosine(37) in tRNA + diphosphate. Functionally, catalyzes the transfer of a dimethylallyl group onto the adenine at position 37 in tRNAs that read codons beginning with uridine, leading to the formation of N6-(dimethylallyl)adenosine (i(6)A). The chain is tRNA dimethylallyltransferase from Sphingopyxis alaskensis (strain DSM 13593 / LMG 18877 / RB2256) (Sphingomonas alaskensis).